The primary structure comprises 192 residues: MEVILLERISKLGQMGETVKVRDGFARNYLLPLGKALRANAANKARFESERATLEARNLERKSEAQKVADVLDGKSFIVVRSAGETGQLYGSVAARDVVEVLAAEGFNIGRNQVHLNTPIKAIGLHKVELQLHAEVEINIELNVARSAEEAERQAKGEELTSVDAIYGVDEDALRPEDFFDPEADGLDENEA.

The disordered stretch occupies residues 173 to 192 (ALRPEDFFDPEADGLDENEA). Positions 179-192 (FFDPEADGLDENEA) are enriched in acidic residues.

This sequence belongs to the bacterial ribosomal protein bL9 family.

Binds to the 23S rRNA. The sequence is that of Large ribosomal subunit protein bL9 from Rhizobium etli (strain ATCC 51251 / DSM 11541 / JCM 21823 / NBRC 15573 / CFN 42).